The primary structure comprises 230 residues: 6-carboxyhexanoate--CoA ligase (230 aa).

It belongs to the BioW family. Homodimer. Mg(2+) serves as cofactor.

It carries out the reaction heptanedioate + ATP + CoA = 6-carboxyhexanoyl-CoA + AMP + diphosphate. It functions in the pathway metabolic intermediate metabolism; pimeloyl-CoA biosynthesis; pimeloyl-CoA from pimelate: step 1/1. Catalyzes the transformation of pimelate into pimeloyl-CoA with concomitant hydrolysis of ATP to AMP. This is 6-carboxyhexanoate--CoA ligase from Staphylococcus aureus (strain MRSA252).